Consider the following 178-residue polypeptide: Mediator of RNA polymerase II transcription subunit 28 (178 aa).

The disordered stretch occupies residues 1–25; that stretch reads MAAPLGGMFSGQQPGPPQPPPGLLG. Residues 109–145 are a coiled coil; that stretch reads QVIKEDVSELRNELQRKDALVQKHLTKLRHWQQVLED.

It belongs to the Mediator complex subunit 28 family. In terms of assembly, component of the Mediator complex, which is composed of MED1, MED4, MED6, MED7, MED8, MED9, MED10, MED11, MED12, MED13, MED13L, MED14, MED15, MED16, MED17, MED18, MED19, MED20, MED21, MED22, MED23, MED24, MED25, MED26, MED27, MED29, MED30, MED31, CCNC, CDK8 and CDC2L6/CDK11. The MED12, MED13, CCNC and CDK8 subunits form a distinct module termed the CDK8 module. Mediator containing the CDK8 module is less active than Mediator lacking this module in supporting transcriptional activation. Individual preparations of the Mediator complex lacking one or more distinct subunits have been variously termed ARC, CRSP, DRIP, PC2, SMCC and TRAP. Forms a ternary complex with NF2/merlin and GRB2. Binds to actin.

The protein resides in the nucleus. The protein localises to the cytoplasm. It localises to the membrane. Component of the Mediator complex, a coactivator involved in the regulated transcription of nearly all RNA polymerase II-dependent genes. Mediator functions as a bridge to convey information from gene-specific regulatory proteins to the basal RNA polymerase II transcription machinery. Mediator is recruited to promoters by direct interactions with regulatory proteins and serves as a scaffold for the assembly of a functional preinitiation complex with RNA polymerase II and the general transcription factors. May be part of a complex containing NF2/merlin that participates in cellular signaling to the actin cytoskeleton downstream of tyrosine kinase signaling pathways. This chain is Mediator of RNA polymerase II transcription subunit 28 (MED28), found in Bos taurus (Bovine).